The primary structure comprises 356 residues: S-adenosylmethionine:tRNA ribosyltransferase-isomerase (356 aa).

This sequence belongs to the QueA family. As to quaternary structure, monomer.

The protein localises to the cytoplasm. The enzyme catalyses 7-aminomethyl-7-carbaguanosine(34) in tRNA + S-adenosyl-L-methionine = epoxyqueuosine(34) in tRNA + adenine + L-methionine + 2 H(+). The protein operates within tRNA modification; tRNA-queuosine biosynthesis. In terms of biological role, transfers and isomerizes the ribose moiety from AdoMet to the 7-aminomethyl group of 7-deazaguanine (preQ1-tRNA) to give epoxyqueuosine (oQ-tRNA). The sequence is that of S-adenosylmethionine:tRNA ribosyltransferase-isomerase from Histophilus somni (strain 2336) (Haemophilus somnus).